We begin with the raw amino-acid sequence, 103 residues long: Urease subunit beta (103 aa).

This sequence belongs to the urease beta subunit family. As to quaternary structure, heterotrimer of UreA (gamma), UreB (beta) and UreC (alpha) subunits. Three heterotrimers associate to form the active enzyme.

Its subcellular location is the cytoplasm. The enzyme catalyses urea + 2 H2O + H(+) = hydrogencarbonate + 2 NH4(+). The protein operates within nitrogen metabolism; urea degradation; CO(2) and NH(3) from urea (urease route): step 1/1. This Streptomyces coelicolor (strain ATCC BAA-471 / A3(2) / M145) protein is Urease subunit beta.